Here is a 583-residue protein sequence, read N- to C-terminus: Lipoprotein LpqB (583 aa).

A signal peptide spans 1-29 (MSNKTTEATKTTKVKKVLSVVAGLGLLAG). Residue Cys30 is the site of N-palmitoyl cysteine attachment. Cys30 is lipidated: S-diacylglycerol cysteine. Residues 38-63 (NPEAISSYAPAPSGQEAPTPTDGQPS) form a disordered region.

This sequence belongs to the LpqB lipoprotein family.

The protein resides in the cell membrane. The polypeptide is Lipoprotein LpqB (Corynebacterium jeikeium (strain K411)).